The primary structure comprises 233 residues: Large ribosomal subunit protein eL6y (233 aa).

Residues histidine 48–lysine 72 are compositionally biased toward basic and acidic residues. The interval histidine 48 to proline 82 is disordered.

It belongs to the eukaryotic ribosomal protein eL6 family.

The sequence is that of Large ribosomal subunit protein eL6y (RPL6B) from Arabidopsis thaliana (Mouse-ear cress).